We begin with the raw amino-acid sequence, 440 residues long: Adenylosuccinate synthetase (440 aa).

GTP-binding positions include 12–18 and 40–42; these read GDEGKGK and GHT. Asp-13 functions as the Proton acceptor in the catalytic mechanism. Residues Asp-13 and Gly-40 each contribute to the Mg(2+) site. IMP-binding positions include 13-16, 38-41, Thr-128, Arg-142, Gln-223, Thr-238, and Arg-302; these read DEGK and NAGH. The Proton donor role is filled by His-41. 298–304 lines the substrate pocket; the sequence is TTTGRPR. GTP is bound by residues Arg-304, 330–332, and 412–414; these read KLD and SVG.

The protein belongs to the adenylosuccinate synthetase family. In terms of assembly, homodimer. It depends on Mg(2+) as a cofactor.

The protein resides in the cytoplasm. It carries out the reaction IMP + L-aspartate + GTP = N(6)-(1,2-dicarboxyethyl)-AMP + GDP + phosphate + 2 H(+). The protein operates within purine metabolism; AMP biosynthesis via de novo pathway; AMP from IMP: step 1/2. Functionally, plays an important role in the de novo pathway of purine nucleotide biosynthesis. Catalyzes the first committed step in the biosynthesis of AMP from IMP. The sequence is that of Adenylosuccinate synthetase from Gloeobacter violaceus (strain ATCC 29082 / PCC 7421).